Reading from the N-terminus, the 211-residue chain is Thiamine-phosphate synthase (211 aa).

Residues 40–42 (QLR) and Asn72 each bind 4-amino-2-methyl-5-(diphosphooxymethyl)pyrimidine. Mg(2+) is bound by residues Asp73 and Asp92. Residue Ser111 participates in 4-amino-2-methyl-5-(diphosphooxymethyl)pyrimidine binding. 136–138 (TST) lines the 2-[(2R,5Z)-2-carboxy-4-methylthiazol-5(2H)-ylidene]ethyl phosphate pocket. Lys139 provides a ligand contact to 4-amino-2-methyl-5-(diphosphooxymethyl)pyrimidine. 2-[(2R,5Z)-2-carboxy-4-methylthiazol-5(2H)-ylidene]ethyl phosphate-binding positions include Gly167 and 187–188 (VS).

The protein belongs to the thiamine-phosphate synthase family. Requires Mg(2+) as cofactor.

The catalysed reaction is 2-[(2R,5Z)-2-carboxy-4-methylthiazol-5(2H)-ylidene]ethyl phosphate + 4-amino-2-methyl-5-(diphosphooxymethyl)pyrimidine + 2 H(+) = thiamine phosphate + CO2 + diphosphate. It carries out the reaction 2-(2-carboxy-4-methylthiazol-5-yl)ethyl phosphate + 4-amino-2-methyl-5-(diphosphooxymethyl)pyrimidine + 2 H(+) = thiamine phosphate + CO2 + diphosphate. The enzyme catalyses 4-methyl-5-(2-phosphooxyethyl)-thiazole + 4-amino-2-methyl-5-(diphosphooxymethyl)pyrimidine + H(+) = thiamine phosphate + diphosphate. It functions in the pathway cofactor biosynthesis; thiamine diphosphate biosynthesis; thiamine phosphate from 4-amino-2-methyl-5-diphosphomethylpyrimidine and 4-methyl-5-(2-phosphoethyl)-thiazole: step 1/1. In terms of biological role, condenses 4-methyl-5-(beta-hydroxyethyl)thiazole monophosphate (THZ-P) and 2-methyl-4-amino-5-hydroxymethyl pyrimidine pyrophosphate (HMP-PP) to form thiamine monophosphate (TMP). This is Thiamine-phosphate synthase from Laribacter hongkongensis (strain HLHK9).